The sequence spans 151 residues: 3-dehydroquinate dehydratase (151 aa).

Residue tyrosine 24 is the Proton acceptor of the active site. Substrate is bound by residues asparagine 76, histidine 82, and aspartate 89. Catalysis depends on histidine 102, which acts as the Proton donor. Residues 103–104 (VS) and arginine 113 each bind substrate.

Belongs to the type-II 3-dehydroquinase family. Homododecamer.

The catalysed reaction is 3-dehydroquinate = 3-dehydroshikimate + H2O. The protein operates within metabolic intermediate biosynthesis; chorismate biosynthesis; chorismate from D-erythrose 4-phosphate and phosphoenolpyruvate: step 3/7. Catalyzes a trans-dehydration via an enolate intermediate. This chain is 3-dehydroquinate dehydratase, found in Afipia carboxidovorans (strain ATCC 49405 / DSM 1227 / KCTC 32145 / OM5) (Oligotropha carboxidovorans).